Consider the following 223-residue polypeptide: N-terminal Xaa-Pro-Lys N-methyltransferase 1 (223 aa).

Met1 carries the post-translational modification N-acetylmethionine. Thr2 is modified (N-acetylthreonine; in N-terminal Xaa-Pro-Lys N-methyltransferase 1, N-terminally processed). S-adenosyl-L-methionine is bound by residues Gly69, Arg74, 91-93 (DVT), 119-120 (LQ), and Gln135.

It belongs to the methyltransferase superfamily. NTM1 family.

Its subcellular location is the nucleus. The enzyme catalyses N-terminal L-alanyl-L-prolyl-L-lysyl-[protein] + 3 S-adenosyl-L-methionine = N-terminal N,N,N-trimethyl-L-alanyl-L-prolyl-L-lysyl-[protein] + 3 S-adenosyl-L-homocysteine + 3 H(+). The catalysed reaction is N-terminal L-seryl-L-prolyl-L-lysyl-[protein] + 3 S-adenosyl-L-methionine = N-terminal N,N,N-trimethyl-L-seryl-L-prolyl-L-lysyl-[protein] + 3 S-adenosyl-L-homocysteine + 3 H(+). It catalyses the reaction N-terminal L-prolyl-L-prolyl-L-lysyl-[protein] + 2 S-adenosyl-L-methionine = N-terminal N,N-dimethyl-L-prolyl-L-prolyl-L-lysyl-[protein] + 2 S-adenosyl-L-homocysteine + 2 H(+). Distributive alpha-N-methyltransferase that methylates the N-terminus of target proteins containing the N-terminal motif [Ala/Gly/Pro/Ser]-Pro-Lys when the initiator Met is cleaved. Specifically catalyzes mono-, di- or tri-methylation of the exposed alpha-amino group of the Ala, Gly or Ser residue in the [Ala/Gly/Ser]-Pro-Lys motif and mono- or di-methylation of Pro in the Pro-Pro-Lys motif. Some of the substrates may be primed by NTMT2-mediated monomethylation. Catalyzes the trimethylation of the N-terminal Gly in CENPA (after removal of Met-1). Responsible for the N-terminal methylation of KLHL31, MYL2, MYL3, RB1, RCC1, RPL23A and SET. Required during mitosis for normal bipolar spindle formation and chromosome segregation via its action on RCC1. This chain is N-terminal Xaa-Pro-Lys N-methyltransferase 1 (NTMT1), found in Bos taurus (Bovine).